A 628-amino-acid chain; its full sequence is DNA ligase (628 aa).

NAD(+) contacts are provided by residues aspartate 36–aspartate 40, serine 85–leucine 86, and glutamate 117. Residue lysine 119 is the N6-AMP-lysine intermediate of the active site. The NAD(+) site is built by arginine 140, glutamate 174, lysine 309, and lysine 333. The Zn(2+) site is built by cysteine 427, cysteine 430, cysteine 446, and cysteine 452.

It belongs to the NAD-dependent DNA ligase family. LigA subfamily. Requires Mg(2+) as cofactor. Mn(2+) is required as a cofactor.

It catalyses the reaction NAD(+) + (deoxyribonucleotide)n-3'-hydroxyl + 5'-phospho-(deoxyribonucleotide)m = (deoxyribonucleotide)n+m + AMP + beta-nicotinamide D-nucleotide.. In terms of biological role, DNA ligase that catalyzes the formation of phosphodiester linkages between 5'-phosphoryl and 3'-hydroxyl groups in double-stranded DNA using NAD as a coenzyme and as the energy source for the reaction. It is essential for DNA replication and repair of damaged DNA. The chain is DNA ligase from Tropheryma whipplei (strain Twist) (Whipple's bacillus).